A 333-amino-acid chain; its full sequence is UbiA prenyltransferase domain-containing protein 1 (333 aa).

A disordered region spans residues 13-33 (NAESPRGGERNDCGAGAERGP). 8 helical membrane passes run 78-98 (LLVGSAVAVLAVHGAGNLVNT), 129-149 (FGVFLYTVGCICAAGLYAVST), 155-175 (LALVYFGGLSSSFLYTGGIGF), 177-197 (YVALGDVVILITFGPLAVMFA), 199-219 (AVQVGYLSVSPLLYAVPLALS), 240-260 (IVTLAIIIGPAFSYVLYTVLL), 265-285 (LIFCVLATRYTISMALPLLTI), and 310-330 (LNLLLGLFYVFGIMLAPAGAL).

The protein belongs to the UbiA prenyltransferase family.

The protein localises to the endoplasmic reticulum membrane. Its subcellular location is the golgi apparatus membrane. It localises to the mitochondrion membrane. It catalyses the reaction menadiol + (2E,6E,10E)-geranylgeranyl diphosphate = menaquinol-4 + diphosphate. The catalysed reaction is all-trans-decaprenyl diphosphate + 4-hydroxybenzoate = 4-hydroxy-3-(all-trans-decaprenyl)benzoate + diphosphate. It participates in quinol/quinone metabolism; menaquinone biosynthesis. Its pathway is cofactor biosynthesis; ubiquinone biosynthesis. In terms of biological role, prenyltransferase that mediates the formation of menaquinone-4 (MK-4) and coenzyme Q10. MK-4 is a vitamin K2 isoform required for endothelial cell development. Mediates the conversion of phylloquinone (PK) into MK-4, probably by cleaving the side chain of phylloquinone (PK) to release 2-methyl-1,4-naphthoquinone (menadione; K3) and then prenylating it with geranylgeranyl pyrophosphate (GGPP) to form MK-4. Also plays a role in cardiovascular development independently of MK-4 biosynthesis, by acting as a coenzyme Q10 biosynthetic enzyme: coenzyme Q10, also named ubiquinone, plays an important antioxidant role in the cardiovascular system. Mediates biosynthesis of coenzyme Q10 in the Golgi membrane, leading to protect cardiovascular tissues from NOS3/eNOS-dependent oxidative stress. The protein is UbiA prenyltransferase domain-containing protein 1 (UBIAD1) of Gallus gallus (Chicken).